Reading from the N-terminus, the 372-residue chain is Cytochrome b (372 aa).

Transmembrane regions (helical) follow at residues 25 to 45, 69 to 90, 105 to 125, and 170 to 190; these read FGSM…FLAI, WMMQ…YIHI, WLSG…GYVL, and FFAL…IHIM. Positions 75 and 89 each coordinate heme b. Residues His-174 and His-188 each coordinate heme b. Residue His-193 participates in a ubiquinone binding. 4 helical membrane-spanning segments follow: residues 218–238, 280–300, 312–332, and 339–358; these read HKDM…MSFT, LGGT…PFTH, LMQF…WAAT, and FTSI…TMNP.

It belongs to the cytochrome b family. In terms of assembly, the cytochrome bc1 complex contains 3 respiratory subunits (MT-CYB, CYC1 and UQCRFS1), 2 core proteins (UQCRC1 and UQCRC2) and probably 6 low-molecular weight proteins. Heme b serves as cofactor.

The protein resides in the mitochondrion inner membrane. Functionally, component of the ubiquinol-cytochrome c reductase complex (complex III or cytochrome b-c1 complex) that is part of the mitochondrial respiratory chain. The b-c1 complex mediates electron transfer from ubiquinol to cytochrome c. Contributes to the generation of a proton gradient across the mitochondrial membrane that is then used for ATP synthesis. The sequence is that of Cytochrome b (MT-CYB) from Pantherophis vulpinus (Western fox snake).